Reading from the N-terminus, the 355-residue chain is 3-dehydroquinate synthase (355 aa).

NAD(+)-binding positions include 71–76, 105–109, 129–130, K142, and K151; these read EGEERK, GVVGD, and TS. Residues E184, H246, and H263 each contribute to the Zn(2+) site.

Belongs to the sugar phosphate cyclases superfamily. Dehydroquinate synthase family. It depends on NAD(+) as a cofactor. The cofactor is Co(2+). Zn(2+) is required as a cofactor.

The protein resides in the cytoplasm. The catalysed reaction is 7-phospho-2-dehydro-3-deoxy-D-arabino-heptonate = 3-dehydroquinate + phosphate. It functions in the pathway metabolic intermediate biosynthesis; chorismate biosynthesis; chorismate from D-erythrose 4-phosphate and phosphoenolpyruvate: step 2/7. Catalyzes the conversion of 3-deoxy-D-arabino-heptulosonate 7-phosphate (DAHP) to dehydroquinate (DHQ). This chain is 3-dehydroquinate synthase, found in Streptococcus pneumoniae serotype 4 (strain ATCC BAA-334 / TIGR4).